A 287-amino-acid polypeptide reads, in one-letter code: ATP synthase gamma chain (287 aa).

Belongs to the ATPase gamma chain family. In terms of assembly, F-type ATPases have 2 components, CF(1) - the catalytic core - and CF(0) - the membrane proton channel. CF(1) has five subunits: alpha(3), beta(3), gamma(1), delta(1), epsilon(1). CF(0) has three main subunits: a, b and c.

Its subcellular location is the cell membrane. In terms of biological role, produces ATP from ADP in the presence of a proton gradient across the membrane. The gamma chain is believed to be important in regulating ATPase activity and the flow of protons through the CF(0) complex. The sequence is that of ATP synthase gamma chain from Bacillus caldotenax.